The sequence spans 393 residues: MGYYSLTEITAVQYAKDYGYFEEKANVICHEIGDGNLNYVFKLDDGEKSIIIKQALPYAKVVGESWPLSIKRATIESKALQIFAQYVPDYVPVVYSHDEELAITVIEDLSRLTITRKGLIDGEEYPLLSQHIGRFLAHVLFYTSDFGLQSEEKRILEGTFVNPDLCKITEDLVFTDPFGHYDTNDYEPDLQLVVDELWSDKTLKLKVAQYKYKFLTRKETLIHGDLHTGSIFSSPSETKVIDPEFATYGPFGFDIGQFIANLLLNALSREEEKRSVLFFHIEKTWSYFVETFTKLWIGEGVEAYTKEKQWLPIILQNIFTDAVGFAGCELIRRTIGLAHVADLDEIENKETRIQAKKQALSLGKELIKYESKSADIQLFRTLFQQTVSRGVKA.

ATP is bound by residues Asn-38, Lys-53, and 107–109 (EDL). Position 225 (Asp-225) interacts with substrate. Residue 242-244 (DPE) participates in ATP binding. Residue Arg-332 participates in substrate binding.

This sequence belongs to the methylthioribose kinase family. Homodimer.

It carries out the reaction 5-(methylsulfanyl)-D-ribose + ATP = 5-(methylsulfanyl)-alpha-D-ribose 1-phosphate + ADP + H(+). It functions in the pathway amino-acid biosynthesis; L-methionine biosynthesis via salvage pathway; S-methyl-5-thio-alpha-D-ribose 1-phosphate from S-methyl-5'-thioadenosine (hydrolase route): step 2/2. Its function is as follows. Catalyzes the phosphorylation of methylthioribose into methylthioribose-1-phosphate. The chain is Methylthioribose kinase from Bacillus cereus (strain ATCC 14579 / DSM 31 / CCUG 7414 / JCM 2152 / NBRC 15305 / NCIMB 9373 / NCTC 2599 / NRRL B-3711).